A 319-amino-acid chain; its full sequence is Annexin A4 (319 aa).

Alanine 2 is subject to N-acetylalanine. Threonine 7 is modified (phosphothreonine). Phosphoserine is present on serine 12. Annexin repeat units lie at residues 14-85 (FNAA…GMMT), 86-157 (PTVL…SLSA), 169-241 (ALMR…AIVK), and 245-316 (NKSA…ILCG). N6-acetyllysine is present on residues lysine 213, lysine 293, and lysine 300.

This sequence belongs to the annexin family. As to quaternary structure, monomer. Binds to SFTPA1 in a Ca(2+)-dependent manner.

It localises to the zymogen granule membrane. Its function is as follows. May play a role in alveolar type II cells through interaction with the surfactant protein SFTPA1 (SP-A). The polypeptide is Annexin A4 (ANXA4) (Bos taurus (Bovine)).